The sequence spans 107 residues: HTH-type transcriptional regulator Rv2034 (107 aa).

The HTH arsR-type domain occupies 1–93 (MSTYRSPDRA…DLDRFWTRAL (93 aa)). The H-T-H motif DNA-binding region spans 33–56 (VGELARDLPVSRPAVSQHLKVLKT).

In terms of assembly, homodimer.

With respect to regulation, DNA-binding ability is not susceptible to zinc, nickel, cobalt, cadmium, lead, copper and manganese ions. Its function is as follows. Involved in the regulation of lipid metabolism and hypoxic response. Positively regulates transcription of various genes, such as phoP, groEL2 and dosR. Negatively regulates its own transcription. Acts by binding to a specific palindromic sequence motif in promoter regions. The sequence is that of HTH-type transcriptional regulator Rv2034 from Mycobacterium tuberculosis (strain ATCC 25618 / H37Rv).